The following is a 1183-amino-acid chain: PAN2-PAN3 deadenylation complex catalytic subunit PAN2 (1183 aa).

A disordered region spans residues Met1–Ile24. WD repeat units follow at residues Asp159–Ser207, Pro269–Leu309, and Ser327–Thr366. The linker stretch occupies residues Phe369 to Lys520. Residues Lys521–Ser919 form the USP domain. The Exonuclease domain occupies Ile977–Tyr1151. The a divalent metal cation site is built by Asp980, Glu982, Asp1090, and Asp1143.

Belongs to the peptidase C19 family. PAN2 subfamily. Forms a heterotrimer with an asymmetric homodimer of the regulatory subunit PAN3 to form the poly(A)-nuclease (PAN) deadenylation complex. A divalent metal cation is required as a cofactor.

It localises to the cytoplasm. It catalyses the reaction Exonucleolytic cleavage of poly(A) to 5'-AMP.. With respect to regulation, positively regulated by the regulatory subunit PAN3. Catalytic subunit of the poly(A)-nuclease (PAN) deadenylation complex, one of two cytoplasmic mRNA deadenylases involved in mRNA turnover. PAN specifically shortens poly(A) tails of RNA and the activity is stimulated by poly(A)-binding protein PAB1. PAN deadenylation is followed by rapid degradation of the shortened mRNA tails by the CCR4-NOT complex. Deadenylated mRNAs are then degraded by two alternative mechanisms, namely exosome-mediated 3'-5' exonucleolytic degradation, or deadenylation-dependent mRNA decaping and subsequent 5'-3' exonucleolytic degradation by XRN1. May also be involved in post-transcriptional maturation of mRNA poly(A) tails. This Scheffersomyces stipitis (strain ATCC 58785 / CBS 6054 / NBRC 10063 / NRRL Y-11545) (Yeast) protein is PAN2-PAN3 deadenylation complex catalytic subunit PAN2.